A 160-amino-acid polypeptide reads, in one-letter code: Major pollen allergen Bet v 1-F/I (160 aa).

The brassinolide site is built by Lys-55, Tyr-82, Tyr-84, and Asn-101.

It belongs to the BetVI family.

Its subcellular location is the cytoplasm. Functionally, may be a general steroid carrier protein. The sequence is that of Major pollen allergen Bet v 1-F/I (BETV1F) from Betula pendula (European white birch).